We begin with the raw amino-acid sequence, 885 residues long: MAGVNEIRSTFLDYFRKNGHEVVPSSPLVPRNDPTLMFTNAGMVQFKNVFTGLEHRSYNRATTSQKCVRAGGKHNDLDNVGYTARHHTFFEMLGNFSFGDYFKEDAISFAWNLITREFGLPKDKLLVTVYHTDDDAANFWKKIAGLSDDRIIRIPTSDNFWAMGDTGPCGPCSEIFYDHGDHIWGGPPGSPEEDGDRFIEIWNLVFMQFEQQTPELRIDLPRPSIDTGMGLERIAAVLQGVHDNYDIDLFKALIRASEEATGVKAEGDFRASHRVIADHLRASSFLIADGVLPSNEGRGYVLRRIMRRAMRHAQLLGAKEPLMWRLLPALIREMGQAYPELIRAESLISETLKLEETRFRKTLERGLGLLSDASENLAEGDRLDGETAFKLYDTYGFPLDLTQDALRQRGIAVDTEGFNVAMERQKAEARANWTGSGEAATETIWFGIKDKVGATEFLGYETESAEGVIASLVRDGVEVPSVREGETISVVVNQTPFYGESGGQQGDTGTISGEGFVIAVKDTQKKGEGVFVHIGEVTEGTAKAGDVVELKVDSARRTRIRSNHSATHLLHEALRETLGTHVAQKGSLVAPDRLRFDFSHPKPISAEELEAVENLANEIILQNAPVTTRLMAVDDAIAEGAMALFGEKYGDEVRVVSMGTAKHGSKAGKAYSVELCGGTHVRQTGDIGLVRIISEGGVAAGVRRLEALTGEAARLYLEEQDERVKAIASALKTTSADVLDHVNALIDERKKLERELADARKKLALGGGSSDGDSAVEAVNGVNFLGKIVTGVSPRDLKPLADEGKKQVGSGVVLFIGVGEDGKASAVAAVTEDMVGRFSAVDLVRAASAALGGAGGGGRPDMAQAGGPDGAKAADAIAAVKALIA.

Residues histidine 564, histidine 568, cysteine 676, and histidine 680 each contribute to the Zn(2+) site.

Belongs to the class-II aminoacyl-tRNA synthetase family. Zn(2+) is required as a cofactor.

It localises to the cytoplasm. The catalysed reaction is tRNA(Ala) + L-alanine + ATP = L-alanyl-tRNA(Ala) + AMP + diphosphate. Its function is as follows. Catalyzes the attachment of alanine to tRNA(Ala) in a two-step reaction: alanine is first activated by ATP to form Ala-AMP and then transferred to the acceptor end of tRNA(Ala). Also edits incorrectly charged Ser-tRNA(Ala) and Gly-tRNA(Ala) via its editing domain. The polypeptide is Alanine--tRNA ligase (Brucella ovis (strain ATCC 25840 / 63/290 / NCTC 10512)).